The sequence spans 146 residues: MORN repeat-containing protein 4 (146 aa).

MORN repeat units follow at residues 16-38, 39-61, 62-84, and 85-107; these read YRGEWKEGRRHGFGQLVFADGGT, YLGHFENGLFNGFGVLTFSDGSR, YEGEFSQGKFNGVGVFIRYDNMT, and FEGEFKNGRVDGFGLLTFPDGSH.

In terms of assembly, interacts with MYO3A.

The protein resides in the cytoplasm. It localises to the cell projection. It is found in the filopodium tip. The protein localises to the stereocilium. Its function is as follows. Plays a role in promoting axonal degeneration following neuronal injury by toxic insult or trauma. The sequence is that of MORN repeat-containing protein 4 (Morn4) from Mus musculus (Mouse).